The sequence spans 317 residues: UV DNA damage endonuclease (317 aa).

This sequence belongs to the uve1/UvsE family.

Its function is as follows. Component in a DNA repair pathway. Removal of UV LIGHT damaged nucleotides. Recognizes pyrimidine dimers and cleave a phosphodiester bond immediately 5' to the lesion. The protein is UV DNA damage endonuclease of Bacillus cereus (strain Q1).